The chain runs to 170 residues: Lipoprotein signal peptidase (170 aa).

3 helical membrane passes run 9–29, 72–92, and 95–117; these read FNIF…KYLV, IFFI…ALKE, and CITR…DRLF. Residues D124 and D146 contribute to the active site. The chain crosses the membrane as a helical span at residues 143 to 163; it reads NFADSYVVIGMILFLVYDFFI.

It belongs to the peptidase A8 family.

The protein resides in the cell inner membrane. It catalyses the reaction Release of signal peptides from bacterial membrane prolipoproteins. Hydrolyzes -Xaa-Yaa-Zaa-|-(S,diacylglyceryl)Cys-, in which Xaa is hydrophobic (preferably Leu), and Yaa (Ala or Ser) and Zaa (Gly or Ala) have small, neutral side chains.. It functions in the pathway protein modification; lipoprotein biosynthesis (signal peptide cleavage). This protein specifically catalyzes the removal of signal peptides from prolipoproteins. The sequence is that of Lipoprotein signal peptidase from Borrelia garinii subsp. bavariensis (strain ATCC BAA-2496 / DSM 23469 / PBi) (Borreliella bavariensis).